The chain runs to 863 residues: Leucine--tRNA ligase (863 aa).

The 'HIGH' region signature appears at 42 to 52; it reads PYPSGRLHMGH. Residues 622–626 carry the 'KMSKS' region motif; sequence KMSKS. Position 625 (lysine 625) interacts with ATP.

It belongs to the class-I aminoacyl-tRNA synthetase family.

Its subcellular location is the cytoplasm. It carries out the reaction tRNA(Leu) + L-leucine + ATP = L-leucyl-tRNA(Leu) + AMP + diphosphate. The protein is Leucine--tRNA ligase of Shewanella denitrificans (strain OS217 / ATCC BAA-1090 / DSM 15013).